The chain runs to 769 residues: Calcium up-regulated protein F (769 aa).

Positions 1–21 (MINIKDISKSSNQSEEKSLKG) are disordered. 2 consecutive Ricin B-type lectin domains span residues 25 to 145 (KTKY…WTTF) and 116 to 249 (QGNG…WGIN).

Belongs to the cup family.

The protein resides in the cytoplasm. It is found in the membrane. May play an important role in stabilizing and/or regulating the cell membrane during Ca(2+) stress or certain stages of development. This chain is Calcium up-regulated protein F (cupF), found in Dictyostelium discoideum (Social amoeba).